The primary structure comprises 345 residues: MSKPNTETISVNIPESEGVPLPDEQSVAERSIVNQSPNNSTVVTVNSEGDVSKIITRIKNHLASFNYAASLDFNKDKDHDKVLTVGEYKISRECLLHYLSGNPDFLKSSAGECSKAIQTFSNESGNLDLESLLTLSPNKDFIHDTNFYKNLYGFNVSIADFIANNNEFKKANYNTQIRILQNYHEFLKQSIEYFNKYMNQYKVIDDNLISRSYNLMYLLNVLTFRRANVGRNINELLDSYNKLNQAIATNLAIYDSINKSKLEIAPEARSSIIDKGVQDLVNSLKQRTNILKKQGETLKKNVEDINKDTSNLKRHATGDIIGIADSLRKEVDSVATSFVSTEKKK.

The segment covering 1–13 has biased composition (polar residues); sequence MSKPNTETISVNI. A disordered region spans residues 1 to 23; the sequence is MSKPNTETISVNIPESEGVPLPD. Positions 283–316 form a coiled coil; sequence SLKQRTNILKKQGETLKKNVEDINKDTSNLKRHA.

It is found in the virion. This is an uncharacterized protein from Acanthamoeba polyphaga mimivirus (APMV).